Reading from the N-terminus, the 354-residue chain is Guanine nucleotide-binding protein G(i) subunit alpha-3 (354 aa).

The N-myristoyl glycine moiety is linked to residue glycine 2. Residue cysteine 3 is the site of S-palmitoyl cysteine attachment. One can recognise a G-alpha domain in the interval 32–354 (KEVKLLLLGA…KNNLKECGLY (323 aa)). Residues 35–48 (KLLLLGAGESGKST) form a G1 motif region. The GTP site is built by glycine 42, glutamate 43, serine 44, glycine 45, lysine 46, serine 47, threonine 48, aspartate 150, serine 151, leucine 175, arginine 176, threonine 177, arginine 178, valine 179, lysine 180, threonine 181, valine 201, glycine 203, asparagine 269, lysine 270, aspartate 272, leucine 273, cysteine 325, alanine 326, and threonine 327. Serine 47 contributes to the Mg(2+) binding site. The segment at 173–181 (DVLRTRVKT) is G2 motif. Position 181 (threonine 181) interacts with Mg(2+). Residues 196–205 (FKMFDVGGQR) are G3 motif. The segment at 265–272 (ILFLNKKD) is G4 motif. The segment at 324–329 (TCATDT) is G5 motif.

The protein belongs to the G-alpha family. G(i/o/t/z) subfamily. In terms of assembly, heterotrimeric G proteins are composed of 3 units; alpha, beta and gamma. The alpha subunit contains the guanine nucleotide binding site. GTP binding causes dissociation of the heterotrimer, liberating the individual subunits so that they can interact with downstream effector proteins. Forms a complex with CCDC88A/GIV and EGFR which leads to enhanced EGFR signaling and triggering of cell migration; ligand stimulation is required for recruitment of GNAI3 to the complex. Interacts (inactive GDP-bound form) with CCDC88A/GIV (via GBA motif); the interaction leads to activation of GNAI3. Interacts (inactive GDP-bound form) with CCDC88C/DAPLE (via GBA motif); the interaction leads to activation of GNAI3. Interacts (inactive GDP-bound form) with NUCB1 (via GBA motif) and NUCB2 (via GBA motif); the interaction leads to activation of GNAI3. Interacts (inactive GDP-bound form) with PLCD4 (via GBA motif); the interaction leads to activation of GNAI3. Interacts with INSR; the interaction is probably mediated by CCDC88A/GIV. Interacts with GPSM1. Interacts (GDP-bound form) with GPSM2 (via GoLoco domains). Does not interact with RGS2. Interacts with RGS8 and RGS10; this strongly enhances the intrinsic GTPase activity. Interacts with RGS12. Interacts with RGS16; this strongly enhances the intrinsic GTPase activity. Interacts (via active GTP- or inactive GDP-bound form) with RGS14. Interacts (via active GTP-bound form) with TRPC5 (via ANK repeats) in a homotetrameric ion channel; the interaction is direct and activates the channel activity. As to expression, ubiquitous.

Its subcellular location is the cytoplasm. It localises to the cell membrane. The protein resides in the cytoskeleton. The protein localises to the microtubule organizing center. It is found in the centrosome. Its function is as follows. Heterotrimeric guanine nucleotide-binding proteins (G proteins) function as transducers downstream of G protein-coupled receptors (GPCRs) in numerous signaling cascades. The alpha chain contains the guanine nucleotide binding site and alternates between an active, GTP-bound state and an inactive, GDP-bound state. Signaling by an activated GPCR promotes GDP release and GTP binding. The alpha subunit has a low GTPase activity that converts bound GTP to GDP, thereby terminating the signal. Both GDP release and GTP hydrolysis are modulated by numerous regulatory proteins. Signaling is mediated via effector proteins, such as adenylate cyclase. Inhibits adenylate cyclase activity, leading to decreased intracellular cAMP levels. Stimulates the activity of receptor-regulated K(+) channels. The active GTP-bound form prevents the association of RGS14 with centrosomes and is required for the translocation of RGS14 from the cytoplasm to the plasma membrane. May play a role in cell division. The active GTP-bound form activates the calcium permeant TRPC5 ion channels. This chain is Guanine nucleotide-binding protein G(i) subunit alpha-3 (Gnai3), found in Rattus norvegicus (Rat).